The following is a 272-amino-acid chain: uncharacterized protein (272 aa).

This is an uncharacterized protein from Bacillus subtilis (strain 168).